A 985-amino-acid chain; its full sequence is Alanine--tRNA ligase, mitochondrial (985 aa).

The transit peptide at 1–23 directs the protein to the mitochondrion; the sequence is MAASVAAAARRLRRAIRRSPAWR. ATP is bound by residues R110, H128, W210, and 240–242; that span reads LWN. 2 residues coordinate L-alanine: N242 and D265. G269 is an ATP binding site. Positions 632, 636, 749, and 753 each coordinate Zn(2+).

Belongs to the class-II aminoacyl-tRNA synthetase family. Monomer. Zn(2+) is required as a cofactor.

The protein localises to the mitochondrion. The enzyme catalyses tRNA(Ala) + L-alanine + ATP = L-alanyl-tRNA(Ala) + AMP + diphosphate. It catalyses the reaction (S)-lactate + ATP + H(+) = (S)-lactoyl-AMP + diphosphate. It carries out the reaction (S)-lactoyl-AMP + L-lysyl-[protein] = N(6)-[(S)-lactoyl]-L-lysyl-[protein] + AMP + 2 H(+). In terms of biological role, catalyzes the attachment of alanine to tRNA(Ala) in a two-step reaction: alanine is first activated by ATP to form Ala-AMP and then transferred to the acceptor end of tRNA(Ala). Also edits incorrectly charged tRNA(Ala) via its editing domain. In presence of high levels of lactate, also acts as a protein lactyltransferase that mediates lactylation of lysine residues in target proteins, such as CGAS. Acts as an inhibitor of cGAS/STING signaling by catalyzing lactylation of CGAS, preventing the formation of liquid-like droplets in which CGAS is activated. The protein is Alanine--tRNA ligase, mitochondrial of Homo sapiens (Human).